Consider the following 252-residue polypeptide: Adenosylcobinamide-GDP ribazoletransferase (252 aa).

Helical transmembrane passes span 4 to 24 (LLLLNLLASIIFYTSIPLPYI), 35 to 55 (LVPMVGLIIGVILGLLDGGMN), 65 to 85 (SALVVALWIFITGGLHLDGAM), 102 to 122 (VMADSATGAFGAMSAIAILLL), 178 to 198 (LLPGLCLMVAVSSLFWLVNNH), 201 to 221 (LITVVGLITGSAIASLTAAWF), and 232 to 252 (TYGAVVEWTEALFLCVLTILT).

Belongs to the CobS family. Mg(2+) is required as a cofactor.

The protein resides in the cell inner membrane. It carries out the reaction alpha-ribazole + adenosylcob(III)inamide-GDP = adenosylcob(III)alamin + GMP + H(+). The catalysed reaction is alpha-ribazole 5'-phosphate + adenosylcob(III)inamide-GDP = adenosylcob(III)alamin 5'-phosphate + GMP + H(+). The protein operates within cofactor biosynthesis; adenosylcobalamin biosynthesis; adenosylcobalamin from cob(II)yrinate a,c-diamide: step 7/7. Functionally, joins adenosylcobinamide-GDP and alpha-ribazole to generate adenosylcobalamin (Ado-cobalamin). Also synthesizes adenosylcobalamin 5'-phosphate from adenosylcobinamide-GDP and alpha-ribazole 5'-phosphate. The polypeptide is Adenosylcobinamide-GDP ribazoletransferase (Trichormus variabilis (strain ATCC 29413 / PCC 7937) (Anabaena variabilis)).